Reading from the N-terminus, the 945-residue chain is Leucine--tRNA ligase (945 aa).

Positions 66 to 77 match the 'HIGH' region motif; that stretch reads PYPSGTGLHVGH. Residues 716 to 720 carry the 'KMSKS' region motif; the sequence is KMGKS. Residue lysine 719 coordinates ATP.

The protein belongs to the class-I aminoacyl-tRNA synthetase family.

It localises to the cytoplasm. The catalysed reaction is tRNA(Leu) + L-leucine + ATP = L-leucyl-tRNA(Leu) + AMP + diphosphate. The polypeptide is Leucine--tRNA ligase (Rhodococcus jostii (strain RHA1)).